The following is a 648-amino-acid chain: NAD(P)H-quinone oxidoreductase subunit 5, chloroplastic (648 aa).

The next 16 membrane-spanning stretches (helical) occupy residues 7–27, 39–59, 89–109, 124–144, 147–167, 189–209, 215–235, 258–278, 289–309, 327–347, 354–374, 395–415, 432–452, 472–492, 518–538, and 625–645; these read AIWL…IGLL, LHGA…LGVL, VDPL…LVMI, FFVY…SPNL, VYGF…FWFT, LLLG…ASIA, LLIA…LVFM, TPIS…FLVA, LVME…ATMA, LGYM…FHLT, ALLF…VGFS, AMTF…ACFW, WLIA…IYFL, LGMV…GSLG, LAEF…GISL, and FYIL…TTHL.

The protein belongs to the complex I subunit 5 family. As to quaternary structure, NDH is composed of at least 16 different subunits, 5 of which are encoded in the nucleus.

Its subcellular location is the plastid. It is found in the chloroplast thylakoid membrane. It carries out the reaction a plastoquinone + NADH + (n+1) H(+)(in) = a plastoquinol + NAD(+) + n H(+)(out). The catalysed reaction is a plastoquinone + NADPH + (n+1) H(+)(in) = a plastoquinol + NADP(+) + n H(+)(out). In terms of biological role, NDH shuttles electrons from NAD(P)H:plastoquinone, via FMN and iron-sulfur (Fe-S) centers, to quinones in the photosynthetic chain and possibly in a chloroplast respiratory chain. The immediate electron acceptor for the enzyme in this species is believed to be plastoquinone. Couples the redox reaction to proton translocation, and thus conserves the redox energy in a proton gradient. The protein is NAD(P)H-quinone oxidoreductase subunit 5, chloroplastic (ndhF) of Nephroselmis olivacea (Green alga).